The following is a 459-amino-acid chain: 23S rRNA (uracil-C(5))-methyltransferase RlmCD (459 aa).

One can recognise a TRAM domain in the interval 6–64 (PVEKNEYYDVTFEDLTHEGAGVAKVQGFPIFVPNALPEEKAQIKVTRVKKGFAFGRLIE). Cysteine 77, cysteine 83, cysteine 86, and cysteine 166 together coordinate [4Fe-4S] cluster. S-adenosyl-L-methionine contacts are provided by glutamine 290, tyrosine 319, glutamate 340, and aspartate 388. Cysteine 415 functions as the Nucleophile in the catalytic mechanism.

This sequence belongs to the class I-like SAM-binding methyltransferase superfamily. RNA M5U methyltransferase family.

The catalysed reaction is uridine(747) in 23S rRNA + S-adenosyl-L-methionine = 5-methyluridine(747) in 23S rRNA + S-adenosyl-L-homocysteine + H(+). The enzyme catalyses uridine(1939) in 23S rRNA + S-adenosyl-L-methionine = 5-methyluridine(1939) in 23S rRNA + S-adenosyl-L-homocysteine + H(+). Its function is as follows. Catalyzes the formation of 5-methyl-uridine at positions 747 (m5U747) and 1939 (m5U1939) in 23S rRNA. The protein is 23S rRNA (uracil-C(5))-methyltransferase RlmCD (rlmCD) of Bacillus subtilis (strain 168).